The following is a 290-amino-acid chain: Glycine--tRNA ligase alpha subunit (290 aa).

This sequence belongs to the class-II aminoacyl-tRNA synthetase family. Tetramer of two alpha and two beta subunits.

The protein localises to the cytoplasm. It carries out the reaction tRNA(Gly) + glycine + ATP = glycyl-tRNA(Gly) + AMP + diphosphate. The polypeptide is Glycine--tRNA ligase alpha subunit (Syntrophobacter fumaroxidans (strain DSM 10017 / MPOB)).